Reading from the N-terminus, the 195-residue chain is Thymidylate kinase (195 aa).

Gly-7 to Ser-14 is an ATP binding site.

Belongs to the thymidylate kinase family.

The enzyme catalyses dTMP + ATP = dTDP + ADP. In terms of biological role, phosphorylation of dTMP to form dTDP in both de novo and salvage pathways of dTTP synthesis. This Helicobacter hepaticus (strain ATCC 51449 / 3B1) protein is Thymidylate kinase.